Reading from the N-terminus, the 407-residue chain is Monooxygenase 2 (407 aa).

Belongs to the 3-hydroxybenzoate 6-hydroxylase family. In terms of assembly, monomer. FAD is required as a cofactor. As to expression, expressed in seeds, seedlings, roots, leaves, flowers, pollen and siliques.

This chain is Monooxygenase 2, found in Arabidopsis thaliana (Mouse-ear cress).